A 309-amino-acid chain; its full sequence is Bifunctional methylenetetrahydrofolate dehydrogenase/cyclohydrolase, mitochondrial (309 aa).

It belongs to the tetrahydrofolate dehydrogenase/cyclohydrolase family. In terms of assembly, homodimer. Mg(2+) is required as a cofactor.

Its subcellular location is the mitochondrion. It catalyses the reaction (6R)-5,10-methylene-5,6,7,8-tetrahydrofolate + NAD(+) = (6R)-5,10-methenyltetrahydrofolate + NADH. The catalysed reaction is (6R)-5,10-methenyltetrahydrofolate + H2O = (6R)-10-formyltetrahydrofolate + H(+). In terms of biological role, may play a role in spermatogenesis. The protein is Bifunctional methylenetetrahydrofolate dehydrogenase/cyclohydrolase, mitochondrial (Nmdmc) of Drosophila melanogaster (Fruit fly).